Consider the following 236-residue polypeptide: uncharacterized protein (236 aa).

This is an uncharacterized protein from Schizosaccharomyces pombe (strain 972 / ATCC 24843) (Fission yeast).